A 257-amino-acid polypeptide reads, in one-letter code: Imidazole glycerol phosphate synthase subunit HisF (257 aa).

Residues Asp-11 and Asp-130 contribute to the active site.

This sequence belongs to the HisA/HisF family. As to quaternary structure, heterodimer of HisH and HisF.

Its subcellular location is the cytoplasm. The catalysed reaction is 5-[(5-phospho-1-deoxy-D-ribulos-1-ylimino)methylamino]-1-(5-phospho-beta-D-ribosyl)imidazole-4-carboxamide + L-glutamine = D-erythro-1-(imidazol-4-yl)glycerol 3-phosphate + 5-amino-1-(5-phospho-beta-D-ribosyl)imidazole-4-carboxamide + L-glutamate + H(+). The protein operates within amino-acid biosynthesis; L-histidine biosynthesis; L-histidine from 5-phospho-alpha-D-ribose 1-diphosphate: step 5/9. IGPS catalyzes the conversion of PRFAR and glutamine to IGP, AICAR and glutamate. The HisF subunit catalyzes the cyclization activity that produces IGP and AICAR from PRFAR using the ammonia provided by the HisH subunit. The sequence is that of Imidazole glycerol phosphate synthase subunit HisF from Actinobacillus pleuropneumoniae serotype 7 (strain AP76).